Reading from the N-terminus, the 247-residue chain is Pulmonary surfactant-associated protein A (247 aa).

Residues 1–19 (MWCSLALILILVTVSGIMC) form the signal peptide. N20 carries N-linked (GlcNAc...) asparagine glycosylation. In terms of domain architecture, Collagen-like spans 27 to 99 (GSPGIPGTPG…PGERGPPGLP (73 aa)). A 4-hydroxyproline mark is found at P29, P32, P35, P41, P53, P56, P62, P66, and P69. The tract at residues 32-101 (PGTPGSHGLP…ERGPPGLPAS (70 aa)) is disordered. Positions 41–50 (PGRDGRDGVK) are enriched in basic and acidic residues. Over residues 53–64 (PGPPGPMGPPGV) the composition is skewed to pro residues. The segment covering 83–92 (ERGDKGDPGE) has biased composition (basic and acidic residues). Residues 131–247 (LAVGDKVFAT…LQSRLTICEF (117 aa)) enclose the C-type lectin domain. Disulfide bonds link C154/C245 and C223/C237. An N-linked (GlcNAc...) asparagine glycan is attached at N206. 4 residues coordinate Ca(2+): E214, R216, N233, and D234.

The protein belongs to the SFTPA family. Oligomeric complex of 6 set of homotrimers.

Its subcellular location is the secreted. It localises to the extracellular space. The protein resides in the extracellular matrix. The protein localises to the surface film. In terms of biological role, in presence of calcium ions, it binds to surfactant phospholipids and contributes to lower the surface tension at the air-liquid interface in the alveoli of the mammalian lung and is essential for normal respiration. Enhances the expression of MYO18A/SP-R210 on alveolar macrophages. The protein is Pulmonary surfactant-associated protein A (SFTPA1) of Cavia porcellus (Guinea pig).